The sequence spans 221 residues: Transcription factor bHLH148 (221 aa).

2 disordered regions span residues 1-45 (MASL…GEIH) and 70-89 (LNSS…GKAV). 2 stretches are compositionally biased toward low complexity: residues 26-41 (SASS…SSVS) and 72-82 (SSASTSSSPTA). Residues 148–197 (KRRVSVLRLNKKSIPDVNRKVRVLGRLVPGCGKQSVPVILEEATDYIQAL) form the bHLH domain.

As to quaternary structure, homodimer. Interacts with PRE3. Binds to RSA1.

The protein localises to the nucleus. BHLH transcription factor that binds DNA on specific sequence 5'-CANNTG-3' in target gene promoters. Negatively regulates brassinosteroid signaling. Together with BHLH148/RITF1, regulates the transcription of several genes involved in the detoxification of reactive oxygen species (ROS) generated by salt (NaCl) stress. Confers tolerance to salt and to the oxidative stress-inducing reagents hydrogen peroxide H(2)O(2) and methyl viologen (MV). This Arabidopsis thaliana (Mouse-ear cress) protein is Transcription factor bHLH148.